We begin with the raw amino-acid sequence, 243 residues long: Small ribosomal subunit protein uS2 (243 aa).

It belongs to the universal ribosomal protein uS2 family.

The protein is Small ribosomal subunit protein uS2 of Pseudoalteromonas atlantica (strain T6c / ATCC BAA-1087).